Here is a 197-residue protein sequence, read N- to C-terminus: Holliday junction branch migration complex subunit RuvA (197 aa).

Residues Met-1 to Arg-62 are domain I. The tract at residues Ser-63–Glu-141 is domain II. Residues Glu-141–Ala-145 are flexible linker. Residues Gln-146–Arg-197 form a domain III region.

It belongs to the RuvA family. Homotetramer. Forms an RuvA(8)-RuvB(12)-Holliday junction (HJ) complex. HJ DNA is sandwiched between 2 RuvA tetramers; dsDNA enters through RuvA and exits via RuvB. An RuvB hexamer assembles on each DNA strand where it exits the tetramer. Each RuvB hexamer is contacted by two RuvA subunits (via domain III) on 2 adjacent RuvB subunits; this complex drives branch migration. In the full resolvosome a probable DNA-RuvA(4)-RuvB(12)-RuvC(2) complex forms which resolves the HJ.

Its subcellular location is the cytoplasm. In terms of biological role, the RuvA-RuvB-RuvC complex processes Holliday junction (HJ) DNA during genetic recombination and DNA repair, while the RuvA-RuvB complex plays an important role in the rescue of blocked DNA replication forks via replication fork reversal (RFR). RuvA specifically binds to HJ cruciform DNA, conferring on it an open structure. The RuvB hexamer acts as an ATP-dependent pump, pulling dsDNA into and through the RuvAB complex. HJ branch migration allows RuvC to scan DNA until it finds its consensus sequence, where it cleaves and resolves the cruciform DNA. This is Holliday junction branch migration complex subunit RuvA from Exiguobacterium sibiricum (strain DSM 17290 / CCUG 55495 / CIP 109462 / JCM 13490 / 255-15).